A 743-amino-acid polypeptide reads, in one-letter code: Ectonucleotide pyrophosphatase/phosphodiesterase C27A7.3 (743 aa).

At methionine 1–lysine 23 the chain is on the cytoplasmic side. The chain crosses the membrane as a helical; Signal-anchor for type II membrane protein span at residues isoleucine 24–valine 44. The Lumenal portion of the chain corresponds to alanine 45–tryptophan 743. Positions 87 and 123 each coordinate Zn(2+). Threonine 123 acts as the Nucleophile in catalysis. Asparagine 195 carries an N-linked (GlcNAc...) asparagine glycan. 4 residues coordinate Zn(2+): aspartate 243, histidine 247, aspartate 286, and histidine 287. 2 N-linked (GlcNAc...) asparagine glycosylation sites follow: asparagine 293 and asparagine 320. Histidine 383 is a Zn(2+) binding site. N-linked (GlcNAc...) asparagine glycosylation is found at asparagine 406, asparagine 434, and asparagine 536. Ca(2+)-binding residues include aspartate 635, asparagine 637, aspartate 639, isoleucine 641, and aspartate 643. The N-linked (GlcNAc...) asparagine glycan is linked to asparagine 737.

This sequence belongs to the nucleotide pyrophosphatase/phosphodiesterase family. Requires Zn(2+) as cofactor. Ca(2+) serves as cofactor.

Its subcellular location is the membrane. Probable phosphodiesterase. The chain is Ectonucleotide pyrophosphatase/phosphodiesterase C27A7.3 from Caenorhabditis elegans.